A 455-amino-acid chain; its full sequence is tRNA modification GTPase MnmE (455 aa).

The (6S)-5-formyl-5,6,7,8-tetrahydrofolate site is built by R25, E85, and R124. Residues 221 to 375 (GLSTAIIGRP…IEERINKLFF (155 aa)) form the TrmE-type G domain. Position 231 (N231) interacts with K(+). Residues 231 to 236 (NVGKSS), 250 to 256 (TDIEGTT), and 275 to 278 (DTAG) contribute to the GTP site. S235 contacts Mg(2+). K(+)-binding residues include T250, I252, and T255. T256 serves as a coordination point for Mg(2+). K455 lines the (6S)-5-formyl-5,6,7,8-tetrahydrofolate pocket.

This sequence belongs to the TRAFAC class TrmE-Era-EngA-EngB-Septin-like GTPase superfamily. TrmE GTPase family. In terms of assembly, homodimer. Heterotetramer of two MnmE and two MnmG subunits. K(+) serves as cofactor.

The protein localises to the cytoplasm. Functionally, exhibits a very high intrinsic GTPase hydrolysis rate. Involved in the addition of a carboxymethylaminomethyl (cmnm) group at the wobble position (U34) of certain tRNAs, forming tRNA-cmnm(5)s(2)U34. This chain is tRNA modification GTPase MnmE, found in Streptococcus mutans serotype c (strain ATCC 700610 / UA159).